Reading from the N-terminus, the 150-residue chain is Arginine repressor (150 aa).

It belongs to the ArgR family.

Its subcellular location is the cytoplasm. The protein operates within amino-acid biosynthesis; L-arginine biosynthesis [regulation]. Regulates arginine biosynthesis genes. In Psychromonas ingrahamii (strain DSM 17664 / CCUG 51855 / 37), this protein is Arginine repressor.